A 523-amino-acid polypeptide reads, in one-letter code: Cyclic di-GMP binding protein BcsE (523 aa).

It belongs to the BcsE family.

In terms of biological role, required for cellulose biosynthesis. May have protease activity, but BcsA is not targeted. Binds bis-(3'-5') cyclic diguanylic acid (c-di-GMP). The sequence is that of Cyclic di-GMP binding protein BcsE from Salmonella typhimurium (strain LT2 / SGSC1412 / ATCC 700720).